A 173-amino-acid chain; its full sequence is Succinate dehydrogenase assembly factor 3, mitochondrial (173 aa).

The N-terminal 59 residues, 1–59 (MFRPSTSLALRSTLRQLASASNQPIPPGSEINAVKRTVATILPPIRLYRRIIRAHRRLD), are a transit peptide targeting the mitochondrion. Residues 149–173 (FPPEKQRELAEKAAADAGLSVKKDE) form a disordered region. A compositionally biased stretch (basic and acidic residues) spans 152–162 (EKQRELAEKAA).

The protein belongs to the complex I LYR family. SDHAF3 subfamily. Interacts with the iron-sulfur protein subunit within the SDH catalytic dimer.

The protein localises to the mitochondrion matrix. Plays an essential role in the assembly of succinate dehydrogenase (SDH), an enzyme complex (also referred to as respiratory complex II) that is a component of both the tricarboxylic acid (TCA) cycle and the mitochondrial electron transport chain, and which couples the oxidation of succinate to fumarate with the reduction of ubiquinone (coenzyme Q) to ubiquinol. Promotes maturation of the iron-sulfur protein subunit of the SDH catalytic dimer, protecting it from the deleterious effects of oxidants. May act together with SDHAF1. The sequence is that of Succinate dehydrogenase assembly factor 3, mitochondrial from Mycosarcoma maydis (Corn smut fungus).